A 510-amino-acid chain; its full sequence is NAD(P)H-quinone oxidoreductase subunit 2, chloroplastic (510 aa).

The next 13 helical transmembrane spans lie at 24 to 44 (LLLF…GLIL), 59 to 79 (WFYF…LFRW), 99 to 119 (IFQF…VEYI), 124 to 144 (MAIT…MFLC), 149 to 169 (XITI…LSGY), 183 to 203 (YLLM…WLYG), 229 to 249 (ISIA…PAPF), 295 to 315 (WHLL…LIAI), 323 to 343 (MLAY…IVGD), 347 to 367 (GYAS…GTFA), 395 to 415 (ALSS…AGFF), 418 to 438 (LHLF…IGLL), and 484 to 504 (MTVC…ILAI).

The protein belongs to the complex I subunit 2 family. NDH is composed of at least 16 different subunits, 5 of which are encoded in the nucleus.

Its subcellular location is the plastid. It is found in the chloroplast thylakoid membrane. It catalyses the reaction a plastoquinone + NADH + (n+1) H(+)(in) = a plastoquinol + NAD(+) + n H(+)(out). The enzyme catalyses a plastoquinone + NADPH + (n+1) H(+)(in) = a plastoquinol + NADP(+) + n H(+)(out). In terms of biological role, NDH shuttles electrons from NAD(P)H:plastoquinone, via FMN and iron-sulfur (Fe-S) centers, to quinones in the photosynthetic chain and possibly in a chloroplast respiratory chain. The immediate electron acceptor for the enzyme in this species is believed to be plastoquinone. Couples the redox reaction to proton translocation, and thus conserves the redox energy in a proton gradient. The protein is NAD(P)H-quinone oxidoreductase subunit 2, chloroplastic of Narcissus elegans (Daffodil).